We begin with the raw amino-acid sequence, 86 residues long: Large ribosomal subunit protein bL27 (86 aa).

Residues 1-24 (MAHKKAMGSTENTRDSNPSYLGVK) are disordered. Over residues 9 to 19 (STENTRDSNPS) the composition is skewed to polar residues.

It belongs to the bacterial ribosomal protein bL27 family.

The chain is Large ribosomal subunit protein bL27 from Salinibacter ruber (strain DSM 13855 / M31).